Consider the following 502-residue polypeptide: Lysine--tRNA ligase (502 aa).

Glutamate 398 and glutamate 405 together coordinate Mg(2+).

This sequence belongs to the class-II aminoacyl-tRNA synthetase family. In terms of assembly, homodimer. The cofactor is Mg(2+).

The protein resides in the cytoplasm. It carries out the reaction tRNA(Lys) + L-lysine + ATP = L-lysyl-tRNA(Lys) + AMP + diphosphate. In Thermotoga sp. (strain RQ2), this protein is Lysine--tRNA ligase.